Reading from the N-terminus, the 273-residue chain is MDQKFAVFGNPIGHSKSPRIHALFAEQTGIEHCYGMVLAPNETFEETLTSFFAGGAIGANITTPFKERAHAKCDELTDRASLAGAVNTIKQLKDGRLLGDNTDGIGLLSDLERQHLIQTTDHILLVGAGGAARGVILPLLSYGCKVVITNRTYARAQQLAEVFHHLGDIDAVEMQDLSGQPFDLIINATASGIHGEVPNLPMDIISPQTRCYDMFYQADSTPFLAWSTRLGVTSYADGLGMLVGQAAHAFQLWHGVMPEITPVLNQLRDELAK.

Residues 15–17 (SKS) and Thr-62 contribute to the shikimate site. Lys-66 (proton acceptor) is an active-site residue. Asp-78 contacts NADP(+). Shikimate contacts are provided by Asn-87 and Asp-103. NADP(+)-binding positions include 127-131 (GAGGA), 150-155 (NRTYAR), and Met-214. Tyr-216 provides a ligand contact to shikimate. Gly-238 provides a ligand contact to NADP(+).

The protein belongs to the shikimate dehydrogenase family. Homodimer.

It carries out the reaction shikimate + NADP(+) = 3-dehydroshikimate + NADPH + H(+). It functions in the pathway metabolic intermediate biosynthesis; chorismate biosynthesis; chorismate from D-erythrose 4-phosphate and phosphoenolpyruvate: step 4/7. Involved in the biosynthesis of the chorismate, which leads to the biosynthesis of aromatic amino acids. Catalyzes the reversible NADPH linked reduction of 3-dehydroshikimate (DHSA) to yield shikimate (SA). The protein is Shikimate dehydrogenase (NADP(+)) of Yersinia enterocolitica serotype O:8 / biotype 1B (strain NCTC 13174 / 8081).